We begin with the raw amino-acid sequence, 311 residues long: MSVTVQMLVDKVKLDVIYGTQELLQKEIATADISRPGLEMTGYFDYYAPERIQLLGMKEWSYLTQMTSHNRYSVLKEMFQTETPAIIVARDLTIPEEMLLAAKEEGIAVLQSHVPTSRLSGEMSWYLDSCLAERTSVHGVLMDIYGMGVLIQGDSGIGKSETGLELVKRGHRLVADDRVDVFAKDEETLWGEPAEILRHLLEIRGVGIINVMSLYGASAVKDSSQVQLSIFLENFEKDKMFDRLGNGNEDIELSGVKIPRIRIPVKTGRNVSVVIEAAAMNYRAKQMGYDATETFEKRLTNLIDQNEASHD.

Active-site residues include His-138 and Lys-159. Position 153 to 160 (153 to 160 (GDSGIGKS)) interacts with ATP. Ser-160 is a Mg(2+) binding site. Asp-177 (proton acceptor; for phosphorylation activity. Proton donor; for dephosphorylation activity) is an active-site residue. The segment at 201–210 (LEIRGVGIIN) is important for the catalytic mechanism of both phosphorylation and dephosphorylation. Glu-202 contacts Mg(2+). Arg-243 is an active-site residue. Residues 264–269 (PVKTGR) form an important for the catalytic mechanism of dephosphorylation region.

It belongs to the HPrK/P family. Homohexamer. Mg(2+) serves as cofactor.

The catalysed reaction is [HPr protein]-L-serine + ATP = [HPr protein]-O-phospho-L-serine + ADP + H(+). The enzyme catalyses [HPr protein]-O-phospho-L-serine + phosphate + H(+) = [HPr protein]-L-serine + diphosphate. Its function is as follows. Catalyzes the ATP- as well as the pyrophosphate-dependent phosphorylation of a specific serine residue in HPr, a phosphocarrier protein of the phosphoenolpyruvate-dependent sugar phosphotransferase system (PTS). HprK/P also catalyzes the pyrophosphate-producing, inorganic phosphate-dependent dephosphorylation (phosphorolysis) of seryl-phosphorylated HPr (P-Ser-HPr). The two antagonistic activities of HprK/P are regulated by several intracellular metabolites, which change their concentration in response to the absence or presence of rapidly metabolisable carbon sources (glucose, fructose, etc.) in the growth medium. Therefore, by controlling the phosphorylation state of HPr, HPrK/P is a sensor enzyme that plays a major role in the regulation of carbon metabolism and sugar transport: it mediates carbon catabolite repression (CCR), and regulates PTS-catalyzed carbohydrate uptake and inducer exclusion. This is HPr kinase/phosphorylase (hprK) from Streptococcus mutans serotype c (strain ATCC 700610 / UA159).